A 341-amino-acid polypeptide reads, in one-letter code: Peroxisomal membrane protein PEX14 (341 aa).

Residue S2 is modified to N-acetylserine. An SH3-binding motif is present at residues 86-94; the sequence is PPTLPHRDW. Residues 276–341 form a disordered region; it reads MQEESDKEKE…QNGQVEDSIP (66 aa). Over residues 279–295 the composition is skewed to basic and acidic residues; it reads ESDKEKENGSDANKDDN. Residues 308–341 show a composition bias toward polar residues; sequence IDSNASIPEWQKNTAANEISVPDWQNGQVEDSIP. S313 carries the post-translational modification Phosphoserine.

This sequence belongs to the peroxin-14 family. As to quaternary structure, interacts with PEX13 (via SH3 domain); forming the PEX13-PEX14 docking complex. Interacts with PEX5 (via WxxxF/Y motifs). Interacts with PEX7. Interacts with PEX9.

It is found in the peroxisome membrane. Component of the PEX13-PEX14 docking complex, a translocon channel that specifically mediates the import of peroxisomal cargo proteins bound to PEX5 or PEX21 receptors. The PEX13-PEX14 docking complex forms a large import pore which can be opened to a diameter of about 9 nm. Mechanistically, PEX5 (or PEX21) receptor along with cargo proteins associates with the PEX14 subunit of the PEX13-PEX14 docking complex in the cytosol, leading to the insertion of the receptor into the organelle membrane with the concomitant translocation of the cargo into the peroxisome matrix. The chain is Peroxisomal membrane protein PEX14 from Saccharomyces cerevisiae (strain ATCC 204508 / S288c) (Baker's yeast).